Consider the following 90-residue polypeptide: Major envelope protein (90 aa).

A helical transmembrane segment spans residues 53–70; it reads AVSVVSWAVAAGLIGELI.

The protein localises to the virion membrane. Its function is as follows. Essential for membrane formation. The sequence is that of Major envelope protein (P9) from Pseudomonas savastanoi pv. phaseolicola (Pseudomonas syringae pv. phaseolicola).